A 295-amino-acid chain; its full sequence is Bifunctional protein FolD (295 aa).

Residues 166–168, S195, and I236 each bind NADP(+); that span reads GRS.

This sequence belongs to the tetrahydrofolate dehydrogenase/cyclohydrolase family. As to quaternary structure, homodimer.

It carries out the reaction (6R)-5,10-methylene-5,6,7,8-tetrahydrofolate + NADP(+) = (6R)-5,10-methenyltetrahydrofolate + NADPH. The enzyme catalyses (6R)-5,10-methenyltetrahydrofolate + H2O = (6R)-10-formyltetrahydrofolate + H(+). It participates in one-carbon metabolism; tetrahydrofolate interconversion. Functionally, catalyzes the oxidation of 5,10-methylenetetrahydrofolate to 5,10-methenyltetrahydrofolate and then the hydrolysis of 5,10-methenyltetrahydrofolate to 10-formyltetrahydrofolate. This is Bifunctional protein FolD from Chlorobium luteolum (strain DSM 273 / BCRC 81028 / 2530) (Pelodictyon luteolum).